The primary structure comprises 719 residues: MSVDKAELCGSLLTWLQTFHVPSPCASPQDLSSGLAVAYVLNQIDPSWFNEAWLQGISEDPGPNWKLKVSNLKMVLRSLVEYSQDVLAHPVSEEHLPDVSLIGEFSDPAELGKLLQLVLGCAISCEKKQDHIQRIMTLEESVQHVVMEAIQELMTKDTPDSLSPETYGNFDSQSRRYYFLSEEAEEGDELQQRCLDLERQLMLLSEEKQSLAQENAGLRERMGRPEGEGTPGLTAKKLLLLQSQLEQLQEENFRLESGREDERLRCAELEREVAELQHRNQALTSLAQEAQALKDEMDELRQSSERAGQLEATLTSCRRRLGELRELRRQVRQLEERNAGHAERTRQLEDELRRAGSLRAQLEAQRRQVQELQGQRQEEAMKAEKWLFECRNLEEKYESVTKEKERLLAERDSLREANEELRCAQLQPRGLTQADPSLDPTSTPVDNLAAEILPAELRETLLRLQLENKRLCRQEAADRERQEELQRHLEDANRARHGLETQHRLNQQQLSELRAQVEDLQKALQEQGGKTEDAISILLKRKLEEHLQKLHEADLELQRKREYIEELEPPTDSSTARRIEELQHNLQKKDADLRAMEERYRRYVDKARMVMQTMEPKQRPAAGAPPELHSLRTQLRERDVRIRHLEMDFEKSRSQREQEEKLLISAWYNMGMALQQRAGEERAPAHAQSFLAQQRLATNSRRGPLGRLASLNLRPTDKH.

The required for localization to the centrosome and induction of aggresome formation stretch occupies residues 1 to 161; it reads MSVDKAELCG…ELMTKDTPDS (161 aa). Positions 1–548 are sufficient for interaction with microtubules; sequence MSVDKAELCG…LKRKLEEHLQ (548 aa). The Calponin-homology (CH) domain maps to 6-122; it reads AELCGSLLTW…KLLQLVLGCA (117 aa). At serine 163 the chain carries Phosphoserine. Coiled coils occupy residues 180 to 427 and 455 to 607; these read LSEE…AQLQ and AELR…VDKA. Threonine 230 carries the post-translational modification Phosphothreonine. A required for localization to the centrosome and induction of aggresome formation region spans residues 533 to 719; it reads DAISILLKRK…SLNLRPTDKH (187 aa). The interval 584-719 is sufficient for interaction with CNTRL; sequence HNLQKKDADL…SLNLRPTDKH (136 aa). The interval 696–719 is disordered; sequence LATNSRRGPLGRLASLNLRPTDKH. Serine 710 bears the Phosphoserine mark.

The protein belongs to the hook family. As to quaternary structure, self-associates. Component of the FTS/Hook/FHIP complex (FHF complex), composed of AKTIP/FTS, FHIP1B, and one or more members of the Hook family of proteins HOOK1, HOOK2, and HOOK3. May interact directly with AKTIP/FTS, HOOK1 and HOOK3. Associates with several subunits of the homotypic vesicular sorting complex (the HOPS complex) including VPS16 and VPS41; these interactions may be indirect. Interacts with CNTRL. Interacts with microtubules. Interacts with ZC3H14. Interacts with LRGUK (via guanylate kinase-like domain). Interacts with CCDC181. Interacts with AP4M1; the interaction is direct, mediates the interaction between FTS-Hook-FHIP (FHF) complex and AP-4 and the perinuclear distribution of AP-4.

The protein localises to the cytoplasm. Its subcellular location is the cytoskeleton. It localises to the microtubule organizing center. It is found in the centrosome. The protein resides in the golgi apparatus. The protein localises to the trans-Golgi network. Its function is as follows. Component of the FTS/Hook/FHIP complex (FHF complex). The FHF complex may function to promote vesicle trafficking and/or fusion via the homotypic vesicular protein sorting complex (the HOPS complex). Contributes to the establishment and maintenance of centrosome function. May function in the positioning or formation of aggresomes, which are pericentriolar accumulations of misfolded proteins, proteasomes and chaperones. FHF complex promotes the distribution of AP-4 complex to the perinuclear area of the cell. The polypeptide is Protein Hook homolog 2 (HOOK2) (Homo sapiens (Human)).